The following is a 471-amino-acid chain: FAD-linked oxidoreductase sorD (471 aa).

The signal sequence occupies residues 1–23; that stretch reads MQAASAFATCLLASVGGNSSAVA. 5 N-linked (GlcNAc...) asparagine glycosylation sites follow: asparagine 18, asparagine 29, asparagine 174, asparagine 279, and asparagine 351. One can recognise an FAD-binding PCMH-type domain in the interval 41–212; it reads LLTTPSAIVW…TDFSIRTEPV (172 aa).

Belongs to the oxygen-dependent FAD-linked oxidoreductase family. FAD is required as a cofactor.

It functions in the pathway secondary metabolite biosynthesis. FAD-linked oxidoreductase; part of the gene cluster that mediates the biosynthesis of sorbicillinoids, a diverse group of yellow secondary metabolites that restrict growth of competing pathogenic fungi but not of bacteria. Sorbicillinoids biosynthesis requires the action of two PKSs. SorA iteratively combines three acetyl units and the growing chain is modified by the ketoacyl reductase subunit, and optional by the enoyl reductase subunit in the second cycle. The polyketide is then handed over to the PKS SorB, which adds three more acetyl units, and two methyl groups. SorB releases an aldehyde, which undergoes spontaneous cyclization resulting in the formation of sorbicillin or 2',3'-dihydrosorbicillin. The monooxygenase sorC oxidizes sorbicillin and 2',3'-dihydrosorbicillin to 2',3'-dihydrosorbicillinol and sorbicillinol, respectively. The oxidoreductase sorD further converts sorbicillinol into oxosorbicillinol. Sorbicillinol is the building block for the other sorbicillinoids such as disorbicillinol, bisvertinolon, and dihydrobisvertinolone. This is FAD-linked oxidoreductase sorD from Penicillium rubens (strain ATCC 28089 / DSM 1075 / NRRL 1951 / Wisconsin 54-1255) (Penicillium chrysogenum).